A 499-amino-acid chain; its full sequence is Putative alpha-galactosidase 8 (499 aa).

2 N-linked (GlcNAc...) asparagine glycosylation sites follow: Asn-154 and Asn-191. Asp-238 (nucleophile) is an active-site residue. N-linked (GlcNAc...) asparagine glycosylation occurs at Asn-256. The active-site Proton donor is the Asp-303.

Belongs to the glycosyl hydrolase 27 family.

The protein localises to the secreted. The enzyme catalyses Hydrolysis of terminal, non-reducing alpha-D-galactose residues in alpha-D-galactosides, including galactose oligosaccharides, galactomannans and galactolipids.. Its function is as follows. Putative alpha-galactosidase involved in the degradation of simple oligosaccharides like melibiose, raffinose and stachyose, and of polymeric galacto(gluco)mannans. The sequence is that of Putative alpha-galactosidase 8 (agl8) from Emericella nidulans (strain FGSC A4 / ATCC 38163 / CBS 112.46 / NRRL 194 / M139) (Aspergillus nidulans).